The sequence spans 160 residues: Thebaine synthase 2 (160 aa).

Ser-74 provides a ligand contact to thebaine. The active-site Proton acceptor is His-89. Thr-105 is a binding site for thebaine.

The protein belongs to the MLP family. As to quaternary structure, homodimer (allosteric) and oligomers. In terms of tissue distribution, expressed in poppy latex.

It catalyses the reaction (7S)-O-acetylsalutaridinol = thebaine + acetate + H(+). It functions in the pathway alkaloid biosynthesis; morphine biosynthesis. Slightly inhibited by salutaridine and (7S)-salutaridinol. Functionally, catalyzes the formation of thebaine from (7S)-salutaridinol 7-O-acetate at the expense of labile hydroxylated by-products, which are preferentially produced by spontaneous allylic elimination. No visible activity toward (7S)-salutaridinol (at pH 7). This Papaver somniferum (Opium poppy) protein is Thebaine synthase 2.